The sequence spans 96 residues: Co-chaperonin GroES (96 aa).

Belongs to the GroES chaperonin family. As to quaternary structure, heptamer of 7 subunits arranged in a ring. Interacts with the chaperonin GroEL.

The protein localises to the cytoplasm. Its function is as follows. Together with the chaperonin GroEL, plays an essential role in assisting protein folding. The GroEL-GroES system forms a nano-cage that allows encapsulation of the non-native substrate proteins and provides a physical environment optimized to promote and accelerate protein folding. GroES binds to the apical surface of the GroEL ring, thereby capping the opening of the GroEL channel. The sequence is that of Co-chaperonin GroES from Syntrophomonas wolfei subsp. wolfei (strain DSM 2245B / Goettingen).